The chain runs to 458 residues: Homogentisate 1,2-dioxygenase (458 aa).

Catalysis depends on histidine 308, which acts as the Proton acceptor. Fe cation-binding residues include histidine 351 and glutamate 357. Homogentisate is bound by residues tyrosine 366 and histidine 387. Position 387 (histidine 387) interacts with Fe cation.

Belongs to the homogentisate dioxygenase family. Hexamer; dimer of trimers. The cofactor is Fe cation.

The enzyme catalyses homogentisate + O2 = 4-maleylacetoacetate + H(+). It participates in amino-acid degradation; L-phenylalanine degradation; acetoacetate and fumarate from L-phenylalanine: step 4/6. Its function is as follows. Involved in the catabolism of homogentisate (2,5-dihydroxyphenylacetate or 2,5-OH-PhAc), a central intermediate in the degradation of phenylalanine and tyrosine. Catalyzes the oxidative ring cleavage of the aromatic ring of homogentisate to yield maleylacetoacetate. This is Homogentisate 1,2-dioxygenase from Xanthomonas axonopodis pv. citri (strain 306).